The sequence spans 571 residues: Proline--tRNA ligase (571 aa).

Belongs to the class-II aminoacyl-tRNA synthetase family. ProS type 1 subfamily. Homodimer.

It localises to the cytoplasm. The enzyme catalyses tRNA(Pro) + L-proline + ATP = L-prolyl-tRNA(Pro) + AMP + diphosphate. Its function is as follows. Catalyzes the attachment of proline to tRNA(Pro) in a two-step reaction: proline is first activated by ATP to form Pro-AMP and then transferred to the acceptor end of tRNA(Pro). As ProRS can inadvertently accommodate and process non-cognate amino acids such as alanine and cysteine, to avoid such errors it has two additional distinct editing activities against alanine. One activity is designated as 'pretransfer' editing and involves the tRNA(Pro)-independent hydrolysis of activated Ala-AMP. The other activity is designated 'posttransfer' editing and involves deacylation of mischarged Ala-tRNA(Pro). The misacylated Cys-tRNA(Pro) is not edited by ProRS. The chain is Proline--tRNA ligase from Ectopseudomonas mendocina (strain ymp) (Pseudomonas mendocina).